Here is a 471-residue protein sequence, read N- to C-terminus: Tryptophanase (471 aa).

N6-(pyridoxal phosphate)lysine is present on lysine 270.

Belongs to the beta-eliminating lyase family. Homotetramer. It depends on pyridoxal 5'-phosphate as a cofactor.

It carries out the reaction L-tryptophan + H2O = indole + pyruvate + NH4(+). Its pathway is amino-acid degradation; L-tryptophan degradation via pyruvate pathway; indole and pyruvate from L-tryptophan: step 1/1. The protein is Tryptophanase of Histophilus somni (strain 2336) (Haemophilus somnus).